The following is a 354-amino-acid chain: V-type proton ATPase subunit C (354 aa).

Belongs to the V-ATPase C subunit family. As to quaternary structure, V-ATPase is a heteromultimeric enzyme composed of a peripheral catalytic V1 complex (components A to H) attached to an integral membrane V0 proton pore complex (components: a, c, c', c'' and d).

It is found in the vacuole membrane. Its function is as follows. Subunit of the peripheral V1 complex of vacuolar ATPase. Subunit C is necessary for the assembly of the catalytic sector of the enzyme and is likely to have a specific function in its catalytic activity. V-ATPase is responsible for acidifying a variety of intracellular compartments in eukaryotic cells. In Hordeum vulgare (Barley), this protein is V-type proton ATPase subunit C (VATC).